A 108-amino-acid polypeptide reads, in one-letter code: UPF0235 protein Rpal_0418 (108 aa).

The protein belongs to the UPF0235 family.

The polypeptide is UPF0235 protein Rpal_0418 (Rhodopseudomonas palustris (strain TIE-1)).